The chain runs to 374 residues: Cathepsin W (374 aa).

Positions 1–21 (MAITVYLSCLLVLSMAGLAQG) are cleaved as a signal peptide. Residues 22–127 (IKSSLRSQDP…EVGSEEWGES (106 aa)) constitute a propeptide that is removed on maturation. Intrachain disulfides connect C150/C191 and C184/C226. Residue C153 is part of the active site. A glycan (N-linked (GlcNAc...) asparagine) is linked at N205. Residues H291 and N329 contribute to the active site. N-linked (GlcNAc...) asparagine glycosylation occurs at N347.

The protein belongs to the peptidase C1 family.

Its subcellular location is the endoplasmic reticulum. Functionally, may have a specific function in the mechanism or regulation of T-cell cytolytic activity. The polypeptide is Cathepsin W (CTSW) (Felis catus (Cat)).